We begin with the raw amino-acid sequence, 323 residues long: GTP 3',8-cyclase (323 aa).

The Radical SAM core domain maps to 4-233 (KYGREIDYLR…NGPAKYISIE (230 aa)). Arginine 13 contributes to the GTP binding site. [4Fe-4S] cluster-binding residues include cysteine 20 and cysteine 24. Tyrosine 26 contributes to the S-adenosyl-L-methionine binding site. Cysteine 27 lines the [4Fe-4S] cluster pocket. Arginine 63 contributes to the GTP binding site. Glycine 67 is a binding site for S-adenosyl-L-methionine. Residue threonine 94 participates in GTP binding. Serine 118 provides a ligand contact to S-adenosyl-L-methionine. Lysine 154 contributes to the GTP binding site. Residue methionine 188 coordinates S-adenosyl-L-methionine. [4Fe-4S] cluster-binding residues include cysteine 250 and cysteine 253. Residue 255 to 257 (RIR) participates in GTP binding. Residue cysteine 267 participates in [4Fe-4S] cluster binding.

Belongs to the radical SAM superfamily. MoaA family. In terms of assembly, monomer and homodimer. It depends on [4Fe-4S] cluster as a cofactor.

It catalyses the reaction GTP + AH2 + S-adenosyl-L-methionine = (8S)-3',8-cyclo-7,8-dihydroguanosine 5'-triphosphate + 5'-deoxyadenosine + L-methionine + A + H(+). It participates in cofactor biosynthesis; molybdopterin biosynthesis. Catalyzes the cyclization of GTP to (8S)-3',8-cyclo-7,8-dihydroguanosine 5'-triphosphate. This is GTP 3',8-cyclase from Clostridium perfringens (strain SM101 / Type A).